We begin with the raw amino-acid sequence, 416 residues long: Gamma-glutamyl phosphate reductase (416 aa).

Belongs to the gamma-glutamyl phosphate reductase family.

It is found in the cytoplasm. The enzyme catalyses L-glutamate 5-semialdehyde + phosphate + NADP(+) = L-glutamyl 5-phosphate + NADPH + H(+). The protein operates within amino-acid biosynthesis; L-proline biosynthesis; L-glutamate 5-semialdehyde from L-glutamate: step 2/2. Functionally, catalyzes the NADPH-dependent reduction of L-glutamate 5-phosphate into L-glutamate 5-semialdehyde and phosphate. The product spontaneously undergoes cyclization to form 1-pyrroline-5-carboxylate. This Streptococcus pyogenes serotype M4 (strain MGAS10750) protein is Gamma-glutamyl phosphate reductase.